Consider the following 331-residue polypeptide: Glucokinase (331 aa).

Position 16-21 (16-21 (GDIGGT)) interacts with ATP.

This sequence belongs to the bacterial glucokinase family.

The protein resides in the cytoplasm. The catalysed reaction is D-glucose + ATP = D-glucose 6-phosphate + ADP + H(+). In Pseudomonas aeruginosa (strain LESB58), this protein is Glucokinase.